Reading from the N-terminus, the 306-residue chain is Mycothiol acetyltransferase (306 aa).

N-acetyltransferase domains lie at 5-162 and 155-306; these read VWAE…TFVP and VRLR…AQGS. Acetyl-CoA contacts are provided by residues 82–84 and 90–95; these read LIV and RRGHGT. Residues Glu-182, Lys-222, and Glu-238 each coordinate 1D-myo-inositol 2-(L-cysteinylamino)-2-deoxy-alpha-D-glucopyranoside. Acetyl-CoA contacts are provided by residues 242 to 244 and 249 to 255; these read VGV and QGGGLGK. Tyr-276 contributes to the 1D-myo-inositol 2-(L-cysteinylamino)-2-deoxy-alpha-D-glucopyranoside binding site.

The protein belongs to the acetyltransferase family. MshD subfamily. Monomer.

The catalysed reaction is 1D-myo-inositol 2-(L-cysteinylamino)-2-deoxy-alpha-D-glucopyranoside + acetyl-CoA = mycothiol + CoA + H(+). Catalyzes the transfer of acetyl from acetyl-CoA to desacetylmycothiol (Cys-GlcN-Ins) to form mycothiol. The sequence is that of Mycothiol acetyltransferase from Saccharomonospora viridis (strain ATCC 15386 / DSM 43017 / JCM 3036 / CCUG 5913 / NBRC 12207 / NCIMB 9602 / P101) (Thermoactinomyces viridis).